The sequence spans 1555 residues: Protein TASOR (1555 aa).

Disordered regions lie at residues 1–74 (MEEN…DKRA), 645–711 (QKKK…RQET), 744–773 (QNSTEELPSQKLKNLSQAHDTEREGAGQDQ), 870–911 (ALPN…TTPS), and 1390–1462 (NQGD…PTLD). The span at 35–47 (VQQTLKRTNSTES) shows a compositional bias: polar residues. Residues 61–71 (RRFQIPRKSRD) show a composition bias toward basic residues. Residues 667-688 (DRQSEKAWKHRKCEENVHHDNE) show a composition bias toward basic and acidic residues. Polar residues-rich tracts occupy residues 692-702 (SAQSLISSLGG) and 744-761 (QNSTEELPSQKLKNLSQA). Basic and acidic residues predominate over residues 888–904 (PLHETERQRPRHDRDYC). The segment covering 1402–1417 (SKEEEDMSLDSEDDTP) has biased composition (acidic residues). The segment covering 1448-1458 (ESPSTLNQGKT) has biased composition (polar residues).

Belongs to the TASOR family. Component of the HUSH complex.

Its subcellular location is the nucleus. It is found in the chromosome. Functionally, component of the HUSH complex, a multiprotein complex that mediates epigenetic repression. The HUSH complex is recruited to genomic loci rich in H3K9me3 and is probably required to maintain transcriptional silencing by promoting further deposition of H3K9me3. The sequence is that of Protein TASOR from Xenopus laevis (African clawed frog).